A 254-amino-acid polypeptide reads, in one-letter code: Imidazole glycerol phosphate synthase subunit HisF (254 aa).

Catalysis depends on residues D11 and D130.

This sequence belongs to the HisA/HisF family. In terms of assembly, heterodimer of HisH and HisF.

Its subcellular location is the cytoplasm. It carries out the reaction 5-[(5-phospho-1-deoxy-D-ribulos-1-ylimino)methylamino]-1-(5-phospho-beta-D-ribosyl)imidazole-4-carboxamide + L-glutamine = D-erythro-1-(imidazol-4-yl)glycerol 3-phosphate + 5-amino-1-(5-phospho-beta-D-ribosyl)imidazole-4-carboxamide + L-glutamate + H(+). Its pathway is amino-acid biosynthesis; L-histidine biosynthesis; L-histidine from 5-phospho-alpha-D-ribose 1-diphosphate: step 5/9. In terms of biological role, IGPS catalyzes the conversion of PRFAR and glutamine to IGP, AICAR and glutamate. The HisF subunit catalyzes the cyclization activity that produces IGP and AICAR from PRFAR using the ammonia provided by the HisH subunit. The protein is Imidazole glycerol phosphate synthase subunit HisF of Solibacter usitatus (strain Ellin6076).